The following is a 228-amino-acid chain: Cytochrome c oxidase subunit 2 (228 aa).

At 1–26 (MATWANLGLQNSSSPLMEQLNFFHDH) the chain is on the mitochondrial intermembrane side. The helical transmembrane segment at 27–48 (TLLILIMITVMIAYIMFMLFFN) threads the bilayer. The Mitochondrial matrix portion of the chain corresponds to 49–62 (KFTNRYLLHGQTIE). A helical transmembrane segment spans residues 63-82 (IIWTILPAIILMFIAFPSLR). Topologically, residues 83-228 (LLYLMDEINS…FIKWISSQMN (146 aa)) are mitochondrial intermembrane. Cu cation is bound by residues H161, C196, E198, C200, H204, and M207. Residue E198 participates in Mg(2+) binding.

This sequence belongs to the cytochrome c oxidase subunit 2 family. Component of the cytochrome c oxidase (complex IV, CIV), a multisubunit enzyme composed of a catalytic core of 3 subunits and several supernumerary subunits. The complex exists as a monomer or a dimer and forms supercomplexes (SCs) in the inner mitochondrial membrane with ubiquinol-cytochrome c oxidoreductase (cytochrome b-c1 complex, complex III, CIII). Cu cation serves as cofactor.

The protein localises to the mitochondrion inner membrane. The enzyme catalyses 4 Fe(II)-[cytochrome c] + O2 + 8 H(+)(in) = 4 Fe(III)-[cytochrome c] + 2 H2O + 4 H(+)(out). Functionally, component of the cytochrome c oxidase, the last enzyme in the mitochondrial electron transport chain which drives oxidative phosphorylation. The respiratory chain contains 3 multisubunit complexes succinate dehydrogenase (complex II, CII), ubiquinol-cytochrome c oxidoreductase (cytochrome b-c1 complex, complex III, CIII) and cytochrome c oxidase (complex IV, CIV), that cooperate to transfer electrons derived from NADH and succinate to molecular oxygen, creating an electrochemical gradient over the inner membrane that drives transmembrane transport and the ATP synthase. Cytochrome c oxidase is the component of the respiratory chain that catalyzes the reduction of oxygen to water. Electrons originating from reduced cytochrome c in the intermembrane space (IMS) are transferred via the dinuclear copper A center (CU(A)) of subunit 2 and heme A of subunit 1 to the active site in subunit 1, a binuclear center (BNC) formed by heme A3 and copper B (CU(B)). The BNC reduces molecular oxygen to 2 water molecules using 4 electrons from cytochrome c in the IMS and 4 protons from the mitochondrial matrix. The polypeptide is Cytochrome c oxidase subunit 2 (COII) (Aedes aegypti (Yellowfever mosquito)).